A 320-amino-acid polypeptide reads, in one-letter code: Cytochrome f (320 aa).

The N-terminal stretch at 1 to 35 (MQTRNTLSWIKEEITRSISVSLMIYIITWASISNA) is a signal peptide. Residues Tyr-36, Cys-56, Cys-59, and His-60 each contribute to the heme site. Residues 286–306 (VQGLLFFLASVVLAQIFLVLK) form a helical membrane-spanning segment.

The protein belongs to the cytochrome f family. In terms of assembly, the 4 large subunits of the cytochrome b6-f complex are cytochrome b6, subunit IV (17 kDa polypeptide, petD), cytochrome f and the Rieske protein, while the 4 small subunits are PetG, PetL, PetM and PetN. The complex functions as a dimer. Heme is required as a cofactor.

The protein localises to the plastid. It is found in the chloroplast thylakoid membrane. Functionally, component of the cytochrome b6-f complex, which mediates electron transfer between photosystem II (PSII) and photosystem I (PSI), cyclic electron flow around PSI, and state transitions. This Carica papaya (Papaya) protein is Cytochrome f.